A 420-amino-acid chain; its full sequence is Zinc finger protein 362 (420 aa).

Disordered regions lie at residues 1–28 (MSRS…WPPP), 54–80 (RPPH…ESSQ), and 115–155 (VTGL…SQSR). Residues 121 to 154 (STRTPSVSTSESSAGAGTGTGTSTPSTPTTTSQS) are compositionally biased toward low complexity. The residue at position 162 (T162) is a Phosphothreonine. Positions 178–202 (TIQGHGLLGPPKSERGRKKIKAENP) are disordered. Residue K198 forms a Glycyl lysine isopeptide (Lys-Gly) (interchain with G-Cter in SUMO2) linkage. 6 C2H2-type zinc fingers span residues 227 to 249 (YRCK…SKSH), 255 to 277 (HKCP…LRIH), 283 to 305 (YHCS…TRIH), 311 to 335 (YKCP…QRQH), 341 to 363 (YKCP…LSAH), and 371 to 393 (YCCS…MSKH). Residue S404 is modified to Phosphoserine.

Belongs to the krueppel C2H2-type zinc-finger protein family.

It localises to the nucleus. May be involved in transcriptional regulation. The protein is Zinc finger protein 362 (ZNF362) of Homo sapiens (Human).